Here is a 116-residue protein sequence, read N- to C-terminus: FK506-binding protein 1 (116 aa).

A PPIase FKBP-type domain is found at 19 to 116 (GDKVSIHYTG…IFEVELLKIN (98 aa)).

It belongs to the FKBP-type PPIase family. FKBP1 subfamily.

It localises to the cytoplasm. It carries out the reaction [protein]-peptidylproline (omega=180) = [protein]-peptidylproline (omega=0). Its activity is regulated as follows. Inhibited by both FK506 and rapamycin. Its function is as follows. PPIases accelerate the folding of proteins. It catalyzes the cis-trans isomerization of proline imidic peptide bonds in oligopeptides. The chain is FK506-binding protein 1 (fpr1) from Aspergillus oryzae (strain ATCC 42149 / RIB 40) (Yellow koji mold).